We begin with the raw amino-acid sequence, 290 residues long: ATP synthase gamma chain (290 aa).

Belongs to the ATPase gamma chain family. In terms of assembly, F-type ATPases have 2 components, CF(1) - the catalytic core - and CF(0) - the membrane proton channel. CF(1) has five subunits: alpha(3), beta(3), gamma(1), delta(1), epsilon(1). CF(0) has three main subunits: a, b and c.

The protein localises to the cell inner membrane. Functionally, produces ATP from ADP in the presence of a proton gradient across the membrane. The gamma chain is believed to be important in regulating ATPase activity and the flow of protons through the CF(0) complex. The protein is ATP synthase gamma chain of Erythrobacter litoralis (strain HTCC2594).